A 131-amino-acid polypeptide reads, in one-letter code: Small ribosomal subunit protein uS8 (131 aa).

It belongs to the universal ribosomal protein uS8 family. As to quaternary structure, part of the 30S ribosomal subunit. Contacts proteins S5 and S12.

Its function is as follows. One of the primary rRNA binding proteins, it binds directly to 16S rRNA central domain where it helps coordinate assembly of the platform of the 30S subunit. The polypeptide is Small ribosomal subunit protein uS8 (Campylobacter hominis (strain ATCC BAA-381 / DSM 21671 / CCUG 45161 / LMG 19568 / NCTC 13146 / CH001A)).